The following is a 732-amino-acid chain: Catalase-peroxidase (732 aa).

An N-terminal signal peptide occupies residues 1–45 (MDTKVDNAGKCPVVHTHTAHGGRSNRDWWPNQLNLRILHQNSSLS). The segment at residues 97-220 (WHSAGTYRTG…LSAVQMGLIY (124 aa)) is a cross-link (tryptophyl-tyrosyl-methioninium (Trp-Tyr) (with M-246)). His-98 (proton acceptor) is an active-site residue. The tryptophyl-tyrosyl-methioninium (Tyr-Met) (with W-97) cross-link spans 220 to 246 (YVNPEGPNGNPDPLAAARDIRETFARM). Residue His-261 coordinates heme b.

Belongs to the peroxidase family. Peroxidase/catalase subfamily. Homodimer or homotetramer. Heme b serves as cofactor. In terms of processing, formation of the three residue Trp-Tyr-Met cross-link is important for the catalase, but not the peroxidase activity of the enzyme.

It carries out the reaction H2O2 + AH2 = A + 2 H2O. It catalyses the reaction 2 H2O2 = O2 + 2 H2O. Functionally, bifunctional enzyme with both catalase and broad-spectrum peroxidase activity. The sequence is that of Catalase-peroxidase from Rhizobium rhizogenes (strain K84 / ATCC BAA-868) (Agrobacterium radiobacter).